The sequence spans 557 residues: Dihydroxy-acid dehydratase (557 aa).

Asp78 lines the Mg(2+) pocket. Cys119 contributes to the [2Fe-2S] cluster binding site. Residues Asp120 and Lys121 each coordinate Mg(2+). Position 121 is an N6-carboxylysine (Lys121). A [2Fe-2S] cluster-binding site is contributed by Cys191. A Mg(2+)-binding site is contributed by Glu442. Ser468 (proton acceptor) is an active-site residue.

Belongs to the IlvD/Edd family. Homodimer. [2Fe-2S] cluster serves as cofactor. Mg(2+) is required as a cofactor.

It catalyses the reaction (2R)-2,3-dihydroxy-3-methylbutanoate = 3-methyl-2-oxobutanoate + H2O. The enzyme catalyses (2R,3R)-2,3-dihydroxy-3-methylpentanoate = (S)-3-methyl-2-oxopentanoate + H2O. Its pathway is amino-acid biosynthesis; L-isoleucine biosynthesis; L-isoleucine from 2-oxobutanoate: step 3/4. The protein operates within amino-acid biosynthesis; L-valine biosynthesis; L-valine from pyruvate: step 3/4. Its function is as follows. Functions in the biosynthesis of branched-chain amino acids. Catalyzes the dehydration of (2R,3R)-2,3-dihydroxy-3-methylpentanoate (2,3-dihydroxy-3-methylvalerate) into 2-oxo-3-methylpentanoate (2-oxo-3-methylvalerate) and of (2R)-2,3-dihydroxy-3-methylbutanoate (2,3-dihydroxyisovalerate) into 2-oxo-3-methylbutanoate (2-oxoisovalerate), the penultimate precursor to L-isoleucine and L-valine, respectively. In Syntrophobacter fumaroxidans (strain DSM 10017 / MPOB), this protein is Dihydroxy-acid dehydratase.